The chain runs to 737 residues: Ribosome-releasing factor 2, mitochondrial (737 aa).

The transit peptide at 1–29 directs the protein to the mitochondrion; it reads MLKYALHSGGMPRNRLLRQLSAYIFRRSY. The region spanning 31-310 is the tr-type G domain; that stretch reads SNIRNIGILA…AVNTYLPAPE (280 aa). GTP-binding positions include 40 to 47, 104 to 108, and 158 to 161; these read AHIDAGKT, DTPGH, and NKMD.

The protein belongs to the TRAFAC class translation factor GTPase superfamily. Classic translation factor GTPase family. EF-G/EF-2 subfamily.

The protein resides in the mitochondrion. Functionally, mitochondrial GTPase that mediates the disassembly of ribosomes from messenger RNA at the termination of mitochondrial protein biosynthesis. Not involved in the GTP-dependent ribosomal translocation step during translation elongation. This Drosophila persimilis (Fruit fly) protein is Ribosome-releasing factor 2, mitochondrial.